Here is a 470-residue protein sequence, read N- to C-terminus: ATP synthase subunit beta (470 aa).

157 to 164 (GGAGVGKT) serves as a coordination point for ATP.

This sequence belongs to the ATPase alpha/beta chains family. F-type ATPases have 2 components, CF(1) - the catalytic core - and CF(0) - the membrane proton channel. CF(1) has five subunits: alpha(3), beta(3), gamma(1), delta(1), epsilon(1). CF(0) has three main subunits: a(1), b(2) and c(9-12). The alpha and beta chains form an alternating ring which encloses part of the gamma chain. CF(1) is attached to CF(0) by a central stalk formed by the gamma and epsilon chains, while a peripheral stalk is formed by the delta and b chains.

Its subcellular location is the cell inner membrane. The catalysed reaction is ATP + H2O + 4 H(+)(in) = ADP + phosphate + 5 H(+)(out). Functionally, produces ATP from ADP in the presence of a proton gradient across the membrane. The catalytic sites are hosted primarily by the beta subunits. The polypeptide is ATP synthase subunit beta (Citrifermentans bemidjiense (strain ATCC BAA-1014 / DSM 16622 / JCM 12645 / Bem) (Geobacter bemidjiensis)).